A 217-amino-acid chain; its full sequence is MDVFERTEQNFQHVCNSITRRIKQLPNYGGEKKKIAVREVENDIDEALKFISEMEKLAQNHPQRIKLQTKTKQYHSDIQKYKREVQLAQLQSSNQTNSNPWSNAPDDYQSQYDNQRQHLLQGSNMLDSTSDRLLRTHQISAQSEQIGQNILMDLGKQGEQIRGMRDKLHETDDQIKSARKIMTGIARRLATNKVILSIIILLLMGIIALIICLKWLR.

Topologically, residues 1 to 192 (MDVFERTEQN…TGIARRLATN (192 aa)) are cytoplasmic. Positions 36–97 (AVREVENDID…AQLQSSNQTN (62 aa)) form a coiled coil. The segment at 90–109 (LQSSNQTNSNPWSNAPDDYQ) is disordered. In terms of domain architecture, t-SNARE coiled-coil homology spans 123–185 (SNMLDSTSDR…KSARKIMTGI (63 aa)). The helical; Anchor for type IV membrane protein transmembrane segment at 193-213 (KVILSIIILLLMGIIALIICL) threads the bilayer. Residues 214–217 (KWLR) are Vesicular-facing.

Belongs to the VTI1 family. Component of the SNARE complex composed of syn7A, syn8A, vamp7A and vti1A.

Its subcellular location is the membrane. It is found in the cytoplasmic vesicle. The protein localises to the secretory vesicle membrane. It localises to the clathrin-coated vesicle membrane. The protein resides in the endosome membrane. Its subcellular location is the endoplasmic reticulum membrane. Functionally, V-SNARE that mediates vesicle transport pathways through interactions with t-SNAREs on the target membrane. These interactions are proposed to mediate aspects of the specificity of vesicle trafficking and to promote fusion of the lipid bilayers. This Dictyostelium discoideum (Social amoeba) protein is Vesicle transport through interaction with t-SNAREs homolog 1A.